The following is a 115-amino-acid chain: Large ribosomal subunit protein bL19 (115 aa).

This sequence belongs to the bacterial ribosomal protein bL19 family.

Functionally, this protein is located at the 30S-50S ribosomal subunit interface and may play a role in the structure and function of the aminoacyl-tRNA binding site. In Clostridium kluyveri (strain ATCC 8527 / DSM 555 / NBRC 12016 / NCIMB 10680 / K1), this protein is Large ribosomal subunit protein bL19.